Reading from the N-terminus, the 183-residue chain is MHLLPEFASHHAVSIPELLVSRDERQARQHAWLKRHPVPLVSFTVVAPGPIKDSEVTRRIFNHGVTALRALATKQGWQIQEQAALVSASGPEGMLSIAAPARDLKLATIELEHSHPLGRLWDIDVLTPEGDILSRRDYSLPPRRCLLCEQSAAVCARGKTHQLTDLLNRMEALLNDVDACNVN.

It belongs to the CitX family.

The enzyme catalyses apo-[citrate lyase ACP] + 2'-(5''-triphospho-alpha-D-ribosyl)-3'-dephospho-CoA = holo-[citrate lyase ACP] + diphosphate. In terms of biological role, transfers 2-(5''-triphosphoribosyl)-3'-dephosphocoenzyme-A on a serine residue to the apo-acyl carrier protein (gamma chain) of the citrate lyase to yield holo-acyl carrier protein. This is Apo-citrate lyase phosphoribosyl-dephospho-CoA transferase from Escherichia coli O45:K1 (strain S88 / ExPEC).